The primary structure comprises 173 residues: Nicotinamide-nucleotide adenylyltransferase (173 aa).

It belongs to the archaeal NMN adenylyltransferase family.

The protein resides in the cytoplasm. The catalysed reaction is beta-nicotinamide D-ribonucleotide + ATP + H(+) = diphosphate + NAD(+). It participates in cofactor biosynthesis; NAD(+) biosynthesis; NAD(+) from nicotinamide D-ribonucleotide: step 1/1. This Methanolobus tindarius protein is Nicotinamide-nucleotide adenylyltransferase (ffdC).